Consider the following 72-residue polypeptide: Hydrophobic protein OSR8 (72 aa).

Transmembrane regions (helical) follow at residues 9–29 (FLEILLAIILPPLGVFLRFGC) and 39–59 (LLTILGYVPGIIYAVYVLVAL).

It belongs to the UPF0057 (PMP3) family.

It is found in the membrane. The protein is Hydrophobic protein OSR8 (OSR8) of Oryza sativa subsp. japonica (Rice).